We begin with the raw amino-acid sequence, 375 residues long: Squamosa promoter-binding-like protein 9 (375 aa).

Disordered regions lie at residues 1–30 and 43–73; these read MEMG…SFSG and GGGG…QIPR. Over residues 18–30 the composition is skewed to low complexity; the sequence is SGGSSTESSSFSG. The segment at 71–148 adopts an SBP-type zinc-finger fold; that stretch reads IPRCQVEGCG…AGHNERRRKP (78 aa). C74, C79, C96, H99, C115, C118, H122, and C134 together coordinate Zn(2+). Residues 131 to 147 carry the Bipartite nuclear localization signal motif; that stretch reads KRSCRRRLAGHNERRRK. Disordered regions lie at residues 252–278 and 345–375; these read LLSN…NTWR and SDHH…NWSL. The span at 262 to 275 shows a compositional bias: low complexity; that stretch reads NNNNNNNNNNNNNN. Residues 345–362 are compositionally biased toward basic and acidic residues; that stretch reads SDHHHQSRRQYMEDENTR. Residues 363-375 are compositionally biased toward polar residues; the sequence is AYDSSSHHTNWSL.

It depends on Zn(2+) as a cofactor.

Its subcellular location is the nucleus. The protein resides in the cytoplasm. Trans-acting factor that binds specifically to the consensus nucleotide sequence 5'-TNCGTACAA-3'. The protein is Squamosa promoter-binding-like protein 9 (SPL9) of Arabidopsis thaliana (Mouse-ear cress).